The sequence spans 151 residues: SsrA-binding protein (151 aa).

This sequence belongs to the SmpB family.

It is found in the cytoplasm. In terms of biological role, required for rescue of stalled ribosomes mediated by trans-translation. Binds to transfer-messenger RNA (tmRNA), required for stable association of tmRNA with ribosomes. tmRNA and SmpB together mimic tRNA shape, replacing the anticodon stem-loop with SmpB. tmRNA is encoded by the ssrA gene; the 2 termini fold to resemble tRNA(Ala) and it encodes a 'tag peptide', a short internal open reading frame. During trans-translation Ala-aminoacylated tmRNA acts like a tRNA, entering the A-site of stalled ribosomes, displacing the stalled mRNA. The ribosome then switches to translate the ORF on the tmRNA; the nascent peptide is terminated with the 'tag peptide' encoded by the tmRNA and targeted for degradation. The ribosome is freed to recommence translation, which seems to be the essential function of trans-translation. This is SsrA-binding protein from Campylobacter fetus subsp. fetus (strain 82-40).